Reading from the N-terminus, the 122-residue chain is Large ribosomal subunit protein uL14 (122 aa).

This sequence belongs to the universal ribosomal protein uL14 family. As to quaternary structure, part of the 50S ribosomal subunit. Forms a cluster with proteins L3 and L19. In the 70S ribosome, L14 and L19 interact and together make contacts with the 16S rRNA in bridges B5 and B8.

Functionally, binds to 23S rRNA. Forms part of two intersubunit bridges in the 70S ribosome. The sequence is that of Large ribosomal subunit protein uL14 from Caldicellulosiruptor saccharolyticus (strain ATCC 43494 / DSM 8903 / Tp8T 6331).